The sequence spans 950 residues: Serine/threonine-protein phosphatase 4 regulatory subunit 1 (950 aa).

HEAT repeat units lie at residues 1-25 (MADLSLLQEDLQEDADGFGVDDYSS), 26-63 (ESDVIIIPSALDFVSQDEMLTPLGRLDKYAASENIFNR), 65-81 (MVARSLLDTLREVCDDE), 82-119 (RDCIAVLERISRLADDSEPTVRAELMEQVPHIALFCQE), 127-164 (AFSKFLLPIVVRYLADQNNQVRKTSQAALLALLEQELI), 168-206 (DVETKVCPVLIELTAPDSNDDVKTEAVAIMCKMAPMVGK), 208-246 (ITERLILPRFCEMCCDCRMFHVRKVCAANFGDICSVVGQ), 248-285 (ATEEMLLPRFFQLCSDNVWGVRKACAECFMAVSCATCQ), and 287-324 (IRRTKLSALFINLISDPSRWVRQAAFQSLGPFISTFAN). Disordered regions lie at residues 326–374 (SSSG…SVSN), 413–438 (ESHQEAASNENDKKPGNYKSMLRPEV), and 473–499 (EQNSGGKPSPEGPEEESEGPVPSSPNI). The span at 332–365 (FKEESKSSEEMSVENKNRTRDQEAPEDVQVRPED) shows a compositional bias: basic and acidic residues. HEAT repeat units lie at residues 505-542 (KELEEMIENLEPHIDDPDVKAQVEVLSAALRASSLDAH), 568-606 (INQEDSVPLISDAVENMDSTLHYIHSDSDLSNNSSFSPD), 698-734 (LTAADLVPIFNGFLKDLDEVRIGVLKHLHDFLKLLHI), 799-837 (WISYKLVSEMVKKLHAATPPTFGVDLINELVENFGRCPK), and 861-898 (QFAVHLMPHLLTLANDRVPNVRVLLAKTLRQTLLEKDY). Phosphoserine is present on serine 935.

Serine/threonine-protein phosphatase 4 (PP4) occurs in different assemblies of the catalytic and one or more regulatory subunits. Component of the PP4 complex PPP4C-PPP4R1. Interacts with HDAC3. As to quaternary structure, (Microbial infection) Interacts with merkel polyomavirus small tumor antigen; this interaction bridges small tumor antigen with NEMO to inhibit NF-kappa-B. As to expression, widely expressed with high expression in cultured mesangial cells. Isoform 1 and isoform 2 are expressed in renal tissues.

In terms of biological role, regulatory subunit of serine/threonine-protein phosphatase 4. May play a role in regulation of cell division in renal glomeruli. The PPP4C-PPP4R1 PP4 complex may play a role in dephosphorylation and regulation of HDAC3. Plays a role in the inhibition of TNF-induced NF-kappa-B activation by regulating the dephosphorylation of TRAF2. Its function is as follows. (Microbial infection) Participates in merkel polyomavirus-mediated inhibition of NF-kappa-B by bridging viral small tumor antigen with NEMO. This is Serine/threonine-protein phosphatase 4 regulatory subunit 1 (PPP4R1) from Homo sapiens (Human).